The following is a 90-amino-acid chain: Probable Fe(2+)-trafficking protein (90 aa).

Belongs to the Fe(2+)-trafficking protein family.

Could be a mediator in iron transactions between iron acquisition and iron-requiring processes, such as synthesis and/or repair of Fe-S clusters in biosynthetic enzymes. The sequence is that of Probable Fe(2+)-trafficking protein from Pseudomonas putida (strain W619).